The chain runs to 44 residues: Conotoxin Rg11a (44 aa).

4 disulfide bridges follow: C1–C15, C8–C22, C14–C30, and C21–C36.

In terms of tissue distribution, expressed by the venom duct.

The protein resides in the secreted. Its function is as follows. Neurotoxin. Elicits hypersensibility when injected intracranially in mice. May act via potassium channel currents. The sequence is that of Conotoxin Rg11a from Conus regius (Crown cone).